The sequence spans 391 residues: 8-amino-7-oxononanoate synthase 1 (391 aa).

108–109 (GF) is a binding site for pyridoxal 5'-phosphate. His133 contributes to the substrate binding site. Pyridoxal 5'-phosphate is bound by residues Ser180, 205 to 208 (DDAH), and 236 to 239 (TLSK). Lys239 bears the N6-(pyridoxal phosphate)lysine mark. Thr353 lines the substrate pocket.

The protein belongs to the class-II pyridoxal-phosphate-dependent aminotransferase family. BioF subfamily. In terms of assembly, homodimer. Pyridoxal 5'-phosphate is required as a cofactor.

The enzyme catalyses 6-carboxyhexanoyl-[ACP] + L-alanine + H(+) = (8S)-8-amino-7-oxononanoate + holo-[ACP] + CO2. Its pathway is cofactor biosynthesis; biotin biosynthesis. Its function is as follows. Catalyzes the decarboxylative condensation of pimeloyl-[acyl-carrier protein] and L-alanine to produce 8-amino-7-oxononanoate (AON), [acyl-carrier protein], and carbon dioxide. The polypeptide is 8-amino-7-oxononanoate synthase 1 (Bacillus velezensis (strain DSM 23117 / BGSC 10A6 / LMG 26770 / FZB42) (Bacillus amyloliquefaciens subsp. plantarum)).